Here is a 469-residue protein sequence, read N- to C-terminus: Neuraminidase (469 aa).

The Intravirion portion of the chain corresponds to 1–9; it reads MNPNQKIIT. The helical transmembrane segment at 10 to 30 threads the bilayer; it reads IGSVSLTIATICFLMQIAILV. The involved in apical transport and lipid raft association stretch occupies residues 11-33; the sequence is GSVSLTIATICFLMQIAILVTTV. At 31-469 the chain is on the virion surface side; the sequence is TTVTLHFKQY…DGADINLMPI (439 aa). Residues 36–88 form a hypervariable stalk region region; sequence HFKQYECNSPPNNQVMLCEPTIIERNITEIVYLTNTTIEKEICPKLAEYRNWS. N-linked (GlcNAc...) asparagine; by host glycosylation is found at asparagine 61, asparagine 70, and asparagine 86. Positions 91–469 are head of neuraminidase; the sequence is QCKITGFAPF…DGADINLMPI (379 aa). Intrachain disulfides connect cysteine 92–cysteine 417, cysteine 124–cysteine 129, cysteine 183–cysteine 230, cysteine 232–cysteine 237, cysteine 278–cysteine 291, cysteine 280–cysteine 289, cysteine 318–cysteine 337, and cysteine 421–cysteine 447. Arginine 118 is a substrate binding site. Asparagine 146 carries N-linked (GlcNAc...) asparagine; by host glycosylation. The active-site Proton donor/acceptor is aspartate 151. Arginine 152 provides a ligand contact to substrate. N-linked (GlcNAc...) asparagine; by host glycosylation is found at asparagine 200 and asparagine 234. 276–277 contributes to the substrate binding site; sequence EE. Arginine 292 is a binding site for substrate. Ca(2+)-binding residues include aspartate 293, glycine 297, and aspartate 324. Residue asparagine 329 is glycosylated (N-linked (GlcNAc...) asparagine; by host). Arginine 371 provides a ligand contact to substrate. Asparagine 402 carries an N-linked (GlcNAc...) asparagine; by host glycan. Tyrosine 406 acts as the Nucleophile in catalysis.

It belongs to the glycosyl hydrolase 34 family. Homotetramer. Requires Ca(2+) as cofactor. Post-translationally, N-glycosylated.

The protein resides in the virion membrane. Its subcellular location is the host apical cell membrane. The catalysed reaction is Hydrolysis of alpha-(2-&gt;3)-, alpha-(2-&gt;6)-, alpha-(2-&gt;8)- glycosidic linkages of terminal sialic acid residues in oligosaccharides, glycoproteins, glycolipids, colominic acid and synthetic substrates.. Its activity is regulated as follows. Inhibited by the neuraminidase inhibitors zanamivir (Relenza) and oseltamivir (Tamiflu). These drugs interfere with the release of progeny virus from infected cells and are effective against all influenza strains. Resistance to neuraminidase inhibitors is quite rare. Its function is as follows. Catalyzes the removal of terminal sialic acid residues from viral and cellular glycoconjugates. Cleaves off the terminal sialic acids on the glycosylated HA during virus budding to facilitate virus release. Additionally helps virus spread through the circulation by further removing sialic acids from the cell surface. These cleavages prevent self-aggregation and ensure the efficient spread of the progeny virus from cell to cell. Otherwise, infection would be limited to one round of replication. Described as a receptor-destroying enzyme because it cleaves a terminal sialic acid from the cellular receptors. May facilitate viral invasion of the upper airways by cleaving the sialic acid moieties on the mucin of the airway epithelial cells. Likely to plays a role in the budding process through its association with lipid rafts during intracellular transport. May additionally display a raft-association independent effect on budding. Plays a role in the determination of host range restriction on replication and virulence. Sialidase activity in late endosome/lysosome traffic seems to enhance virus replication. This chain is Neuraminidase, found in Influenza A virus (strain A/Niigata/137/1996 H3N2).